The chain runs to 117 residues: Cytochrome c6 (117 aa).

An N-terminal signal peptide occupies residues 1 to 24; sequence MKKLLAIALTVLATVFAFGTPAFA. Heme c-binding residues include C38, C41, H42, and M89.

This sequence belongs to the cytochrome c family. PetJ subfamily. As to quaternary structure, monomer. In terms of processing, binds 1 heme c group covalently per subunit.

Its subcellular location is the cellular thylakoid lumen. In terms of biological role, functions as an electron carrier between membrane-bound cytochrome b6-f and photosystem I in oxygenic photosynthesis. The protein is Cytochrome c6 (petJ) of Picosynechococcus sp. (strain ATCC 27264 / PCC 7002 / PR-6) (Agmenellum quadruplicatum).